The chain runs to 602 residues: T-cell surface protein tactile (602 aa).

A signal peptide spans 1–21 (MGRKWTYCVVYTIIQIQFFRG). Topologically, residues 22 to 536 (VWEELFNVGD…IIVNQPSDGM (515 aa)) are extracellular. Ig-like V-type domains follow at residues 24 to 134 (EELF…VYNL) and 138 to 244 (PYTQ…STTV). Residues Asn-42, Asn-100, Asn-107, Asn-145, Asn-153, Asn-163, Asn-195, Asn-196, Asn-258, Asn-281, Asn-306, Asn-330, Asn-348, Asn-415, Asn-436, and Asn-514 are each glycosylated (N-linked (GlcNAc...) asparagine). Cys-45 and Cys-118 are joined by a disulfide. A disulfide bridge links Cys-160 with Cys-228. The region spanning 250-355 (PEILMTVENS…MWNTSSQPIT (106 aa)) is the Ig-like C2-type domain. Cys-271 and Cys-335 are oxidised to a cystine. The disordered stretch occupies residues 402–478 (ENGLTPDATP…PQEPDSPVSW (77 aa)). Positions 409–433 (ATPQTSNSSMTTKDGNYLEASSGTD) are enriched in polar residues. Positions 434-448 (AKNSSRAAASSKSGS) are enriched in low complexity. A helical membrane pass occupies residues 537–557 (SWPVLVAALLFFCTLLFGLGV). Over 558-602 (RKWYRYQNEIMERPPPFKPPPPPIKYTYIQEPIGCDLCCHEMEVL) the chain is Cytoplasmic.

In terms of assembly, homodimer; disulfide-linked. Interacts with PVR.

The protein resides in the membrane. May be involved in adhesive interactions of activated T and NK cells during the late phase of the immune response. Promotes NK cell-target adhesion by interacting with PVR present on target cells. May function at a time after T and NK cells have penetrated the endothelium using integrins and selectins, when they are actively engaging diseased cells and moving within areas of inflammation. The polypeptide is T-cell surface protein tactile (Cd96) (Mus musculus (Mouse)).